The sequence spans 152 residues: UPF0178 protein NIS_0137 (152 aa).

The protein belongs to the UPF0178 family.

The sequence is that of UPF0178 protein NIS_0137 from Nitratiruptor sp. (strain SB155-2).